The primary structure comprises 331 residues: Ribosomal RNA small subunit methyltransferase H (331 aa).

Residues 38–40, aspartate 56, phenylalanine 83, aspartate 100, and glutamine 107 each bind S-adenosyl-L-methionine; that span reads GGY. The disordered stretch occupies residues 308 to 331; sequence TDAPAGPVDPQVLGMPLIPKKGRR.

This sequence belongs to the methyltransferase superfamily. RsmH family.

It localises to the cytoplasm. The catalysed reaction is cytidine(1402) in 16S rRNA + S-adenosyl-L-methionine = N(4)-methylcytidine(1402) in 16S rRNA + S-adenosyl-L-homocysteine + H(+). Functionally, specifically methylates the N4 position of cytidine in position 1402 (C1402) of 16S rRNA. This chain is Ribosomal RNA small subunit methyltransferase H, found in Cereibacter sphaeroides (strain ATCC 17025 / ATH 2.4.3) (Rhodobacter sphaeroides).